Reading from the N-terminus, the 334-residue chain is Fructose-1,6-bisphosphatase class 1 (334 aa).

Mg(2+)-binding residues include E91, D113, L115, and D116. Substrate contacts are provided by residues 116–119, N208, and K274; that span reads DGSS. E280 is a Mg(2+) binding site.

It belongs to the FBPase class 1 family. Homotetramer. The cofactor is Mg(2+).

The protein localises to the cytoplasm. It catalyses the reaction beta-D-fructose 1,6-bisphosphate + H2O = beta-D-fructose 6-phosphate + phosphate. Its pathway is carbohydrate biosynthesis; gluconeogenesis. This chain is Fructose-1,6-bisphosphatase class 1, found in Janthinobacterium sp. (strain Marseille) (Minibacterium massiliensis).